We begin with the raw amino-acid sequence, 228 residues long: Cytidylate kinase (228 aa).

An ATP-binding site is contributed by 17 to 25 (GPTASGKGT).

This sequence belongs to the cytidylate kinase family. Type 1 subfamily.

The protein resides in the cytoplasm. The catalysed reaction is CMP + ATP = CDP + ADP. It carries out the reaction dCMP + ATP = dCDP + ADP. This is Cytidylate kinase from Burkholderia pseudomallei (strain 1106a).